The chain runs to 455 residues: Venom prothrombin activator notecarin-D1 (455 aa).

An N-terminal signal peptide occupies residues 1–20 (MAPQLLLCLILTFLWSLPEA). The propeptide occupies 21-40 (ESNVFLKSKVANRFLQRTKR). In terms of domain architecture, Gla spans 41–86 (SNSLFEEIRPGNIERECIEEKCSKEEAREVFEDNEKTETFWNVYVD). Glu-46, Glu-47, Glu-54, Glu-56, Glu-59, Glu-60, Glu-65, Glu-66, Glu-69, Glu-72, and Glu-75 each carry 4-carboxyglutamate. The cysteines at positions 57 and 62 are disulfide-linked. The EGF-like 1; calcium-binding domain occupies 86-122 (DGDQCSSNPCHYRGTCKDGIGSYTCTCLPNYEGKNCE). 11 disulfide bridges follow: Cys-90–Cys-101, Cys-95–Cys-110, Cys-112–Cys-121, Cys-129–Cys-140, Cys-136–Cys-149, Cys-151–Cys-164, Cys-172–Cys-328, Cys-216–Cys-221, Cys-236–Cys-252, Cys-376–Cys-390, and Cys-401–Cys-429. Ser-92 carries an O-linked (Hex...) serine glycan. The EGF-like 2 domain occupies 129-164 (CRVDNGNCWHFCKRVQSETQCSCAESYRLGVDGHSC). Positions 182-209 (REASLPDFVQSQKATLLKKSDNPSPDIR) are cleaved as a propeptide — activation peptide. The Peptidase S1 domain maps to 210–453 (IVNGMDCKLG…FIPWIKKIMS (244 aa)). His-251 functions as the Charge relay system in the catalytic mechanism. N-linked (GlcNAc...) asparagine glycosylation occurs at Asn-254. Catalysis depends on Asp-308, which acts as the Charge relay system. Ser-405 acts as the Charge relay system in catalysis.

It belongs to the peptidase S1 family. Snake venom subfamily. As to quaternary structure, heterodimer of a light chain and a heavy chain; disulfide-linked. Gamma-carboxyglutamate residues are formed by vitamin K dependent carboxylation. These residues are essential for the binding of calcium. In terms of tissue distribution, expressed by the venom gland.

The protein localises to the secreted. It carries out the reaction Selective cleavage of Arg-|-Thr and then Arg-|-Ile bonds in prothrombin to form thrombin.. Its function is as follows. Snake prothrombin activator that attacks the hemostatic system of prey. This protein is functionally similar to blood coagulation factor Xa. In Notechis scutatus scutatus (Mainland tiger snake), this protein is Venom prothrombin activator notecarin-D1.